Consider the following 232-residue polypeptide: Large ribosomal subunit protein uL3 (232 aa).

It belongs to the universal ribosomal protein uL3 family. Part of the 50S ribosomal subunit. Forms a cluster with proteins L14 and L19.

Its function is as follows. One of the primary rRNA binding proteins, it binds directly near the 3'-end of the 23S rRNA, where it nucleates assembly of the 50S subunit. The sequence is that of Large ribosomal subunit protein uL3 from Sorangium cellulosum (strain So ce56) (Polyangium cellulosum (strain So ce56)).